The primary structure comprises 134 residues: uncharacterized protein (134 aa).

This is an uncharacterized protein from Thermoproteus tenax virus 1 (strain KRA1) (TTV1).